The primary structure comprises 365 residues: tRNA N6-adenosine threonylcarbamoyltransferase (365 aa).

Fe cation contacts are provided by His119 and His123. Residues 141–145, Asp174, Gly187, and Asn288 contribute to the substrate site; that span reads LVSGG. Asp316 contributes to the Fe cation binding site.

Belongs to the KAE1 / TsaD family. Fe(2+) serves as cofactor.

Its subcellular location is the cytoplasm. The enzyme catalyses L-threonylcarbamoyladenylate + adenosine(37) in tRNA = N(6)-L-threonylcarbamoyladenosine(37) in tRNA + AMP + H(+). In terms of biological role, required for the formation of a threonylcarbamoyl group on adenosine at position 37 (t(6)A37) in tRNAs that read codons beginning with adenine. Is involved in the transfer of the threonylcarbamoyl moiety of threonylcarbamoyl-AMP (TC-AMP) to the N6 group of A37, together with TsaE and TsaB. TsaD likely plays a direct catalytic role in this reaction. The protein is tRNA N6-adenosine threonylcarbamoyltransferase of Rhizobium etli (strain ATCC 51251 / DSM 11541 / JCM 21823 / NBRC 15573 / CFN 42).